Reading from the N-terminus, the 329-residue chain is Short-chain dehydrogenase/reductase prx4 (329 aa).

NADP(+) is bound by residues Ser-58, Ile-60, and Asn-81. Residue Asn-91 is glycosylated (N-linked (GlcNAc...) asparagine). Positions 98, 121, 161, 194, 198, and 229 each coordinate NADP(+). Tyr-194 (proton acceptor) is an active-site residue. Lys-198 serves as the catalytic Lowers pKa of active site Tyr. The chain crosses the membrane as a helical span at residues Gly-238–Val-258.

Belongs to the short-chain dehydrogenases/reductases (SDR) family.

It localises to the membrane. It functions in the pathway sesquiterpene biosynthesis. In terms of biological role, short-chain dehydrogenase/reductase; part of the gene cluster that mediates the biosynthesis of PR-toxin, a bicyclic sesquiterpene belonging to the eremophilane class and acting as a mycotoxin. The first step of the pathway is catalyzed by the aristolochene synthase which performs the cyclization of trans,trans-farnesyl diphosphate (FPP) to the bicyclic sesquiterpene aristolochene. Following the formation of aristolochene, the non-oxygenated aristolochene is converted to the trioxygenated intermediate eremofortin B, via 7-epi-neopetasone. This conversion appears to involve three enzymes, a hydroxysterol oxidase-like enzyme, the quinone-oxidase prx3 that forms the quinone-type-structure in the bicyclic nucleus of aristolochene with the C8-oxo group and the C-3 hydroxyl group, and the P450 monooxygenase ORF6 that introduces the epoxide at the double bond between carbons 1 and 2. No monoxy or dioxy-intermediates have been reported to be released to the broth, so these three early oxidative reactions may be coupled together. Eremofortin B is further oxidized by another P450 monooxygenase, that introduces a second epoxide between carbons 7 and 11 prior to acetylation to eremofortin A by the acetyltransferase ORF8. The second epoxidation may be performed by a second P450 monooxygenase. After the acetylation step, eremofortin A is converted to eremofortin C and then to PR-toxin. First the conversion of eremofortin A to eremofortin C proceeds by oxidation of the side chain of the molecule at C-12 and is catalyzed by the short-chain oxidoreductase prx1. The cytochrome P450 monooxygenase ORF6 is probably also involved in this step. The primary alcohol formed at C-12 is finally oxidized by the short-chain alcohol dehydrogenase prx4 that forms PR-toxin. The sequence is that of Short-chain dehydrogenase/reductase prx4 from Penicillium roqueforti.